The sequence spans 766 residues: Cytoplasmic polyadenylation element-binding protein 3 (766 aa).

Disordered stretches follow at residues 1 to 35 (MSQE…TSET), 131 to 179 (VPSR…ARRL), and 216 to 299 (PVPI…LPPR). Polar residues-rich tracts occupy residues 233 to 256 (ETPT…SDYQ) and 276 to 289 (STPN…NRDN). The region spanning 310 to 332 (IFVGGVPWDITEAALKDSFGEFG) is the RRM domain. Residues 578-602 (KAFSGPNRRSHLSSNSPSKPASLMS) are disordered. Low complexity predominate over residues 589-602 (LSSNSPSKPASLMS).

In terms of biological role, cytoplasmic polyadenylation element binding protein that binds to and regulates the translation of specific mRNAs. The chain is Cytoplasmic polyadenylation element-binding protein 3 (cpb-3) from Caenorhabditis remanei (Caenorhabditis vulgaris).